Consider the following 191-residue polypeptide: MGKKLVMAQKRGETRALCLGVAMVVCAAITYYILGTTVLPLYQKSVWTQESTCHLVETNIKDQEELEGRKVPQYPCLWVNVSAVGRWAMLYHTEDTRDQNQQCSYIPRNLDNYQTALVDVKKVRANFYKHHNFYCFSAPQVNETSVVYQRLYGPQILLFSFFWPTFLLTGGLLIIAMVKLNRSLSVLAAQK.

Topologically, residues 1–18 (MGKKLVMAQKRGETRALC) are cytoplasmic. A helical membrane pass occupies residues 19–39 (LGVAMVVCAAITYYILGTTVL). Topologically, residues 40–155 (PLYQKSVWTQ…VVYQRLYGPQ (116 aa)) are extracellular. N-linked (GlcNAc...) asparagine glycosylation is found at asparagine 80 and asparagine 142. Residues 156–176 (ILLFSFFWPTFLLTGGLLIIA) traverse the membrane as a helical segment. Over 177–191 (MVKLNRSLSVLAAQK) the chain is Cytoplasmic.

The protein belongs to the KCNMB (TC 8.A.14.1) family. KCNMB1 subfamily. As to quaternary structure, interacts with KCNMA1 tetramer. There are probably 4 molecules of KCMNB1 per KCNMA1 tetramer. In terms of processing, N-glycosylated. As to expression, weakly expressed. In brain, it is expressed in a few discrete populations of neurons that also express KCNMA1.

The protein localises to the membrane. In terms of biological role, regulatory subunit of the calcium activated potassium KCNMA1 (maxiK) channel. Modulates the calcium sensitivity and gating kinetics of KCNMA1, thereby contributing to KCNMA1 channel diversity. Increases the apparent Ca(2+)/voltage sensitivity of the KCNMA1 channel. It also modifies KCNMA1 channel kinetics and alters its pharmacological properties. It slows down the activation and the deactivation kinetics of the channel. Acts as a negative regulator of smooth muscle contraction by enhancing the calcium sensitivity to KCNMA1. Its presence is also a requirement for internal binding of the KCNMA1 channel opener dehydrosoyasaponin I (DHS-1) triterpene glycoside and for external binding of the agonist hormone 17-beta-estradiol (E2). Increases the binding activity of charybdotoxin (CTX) toxin to KCNMA1 peptide blocker by increasing the CTX association rate and decreasing the dissociation rate. The chain is Calcium-activated potassium channel subunit beta-1 (Kcnmb1) from Rattus norvegicus (Rat).